The sequence spans 509 residues: Serine/threonine protein kinase OSK4 (509 aa).

Residues 17–269 enclose the Protein kinase domain; it reads YNLGRTLGIG…IREIREHQWF (253 aa). Residues 23–31 and K46 contribute to the ATP site; that span reads LGIGSFGKV. Catalysis depends on D140, which acts as the Proton acceptor. In terms of domain architecture, UBA spans 290–330; the sequence is MIDEDTLQDVVNLGYEKDHVCESLRNRLQNEATVAYYLLLD. In terms of domain architecture, KA1 spans 460-508; sequence NGRLPAVIKFEIQLYKSRDEKYLLDMQRVTGPQLLFLDFCAAFLTKLRV.

It belongs to the protein kinase superfamily. Ser/Thr protein kinase family. As to quaternary structure, interacts with HDR1. Strongly expressed in immature seeds. Mostly expressed in panicles, leaf sheaths and roots, and to a lower extent, in germinating seeds and leaf blades.

It localises to the nucleus. The enzyme catalyses L-seryl-[protein] + ATP = O-phospho-L-seryl-[protein] + ADP + H(+). It carries out the reaction L-threonyl-[protein] + ATP = O-phospho-L-threonyl-[protein] + ADP + H(+). Its function is as follows. Suppressor of flowering in long days (LD) via the that up-regulation of HD1 and the down-regulation of EHD1. Can phosphorylate HD1 in the presence of HDR1. This is Serine/threonine protein kinase OSK4 from Oryza sativa subsp. indica (Rice).